The following is a 223-amino-acid chain: Deoxyribose-phosphate aldolase (223 aa).

Asp-91 functions as the Proton donor/acceptor in the catalytic mechanism. Lys-154 functions as the Schiff-base intermediate with acetaldehyde in the catalytic mechanism. The active-site Proton donor/acceptor is Lys-183.

The protein belongs to the DeoC/FbaB aldolase family. DeoC type 1 subfamily.

Its subcellular location is the cytoplasm. The enzyme catalyses 2-deoxy-D-ribose 5-phosphate = D-glyceraldehyde 3-phosphate + acetaldehyde. It participates in carbohydrate degradation; 2-deoxy-D-ribose 1-phosphate degradation; D-glyceraldehyde 3-phosphate and acetaldehyde from 2-deoxy-alpha-D-ribose 1-phosphate: step 2/2. Its function is as follows. Catalyzes a reversible aldol reaction between acetaldehyde and D-glyceraldehyde 3-phosphate to generate 2-deoxy-D-ribose 5-phosphate. This chain is Deoxyribose-phosphate aldolase, found in Geobacillus thermodenitrificans (strain NG80-2).